We begin with the raw amino-acid sequence, 298 residues long: HTH-type transcriptional regulator ArgP (298 aa).

The region spanning 4 to 60 (LDYKWIEALDAVVYQGSFERAAEHLFVSQSAISQRIKQLEKFLAQPVLIREQPPKPT) is the HTH lysR-type domain. Residues 21 to 40 (FERAAEHLFVSQSAISQRIK) constitute a DNA-binding region (H-T-H motif).

Belongs to the LysR transcriptional regulatory family. Homodimer.

Functionally, controls the transcription of genes involved in arginine and lysine metabolism. This chain is HTH-type transcriptional regulator ArgP, found in Vibrio parahaemolyticus serotype O3:K6 (strain RIMD 2210633).